The following is a 452-amino-acid chain: Probable multidrug resistance protein NorM (452 aa).

The next 12 helical transmembrane spans lie at L14–L34, L56–A76, V97–L117, I129–V149, M164–G184, G195–I215, I244–L264, A284–F304, L319–F339, F360–A380, A392–F412, and A417–F437.

It belongs to the multi antimicrobial extrusion (MATE) (TC 2.A.66.1) family.

It localises to the cell membrane. Multidrug efflux pump. In Bacillus subtilis (strain 168), this protein is Probable multidrug resistance protein NorM (norM).